Here is a 457-residue protein sequence, read N- to C-terminus: Karyogamy meiotic segregation protein 2 (457 aa).

Ser134 carries the post-translational modification Phosphoserine.

Interacts with sad1.

Its subcellular location is the cytoplasm. It localises to the cytoskeleton. The protein localises to the microtubule organizing center. It is found in the spindle pole body. This chain is Karyogamy meiotic segregation protein 2 (kms2), found in Schizosaccharomyces pombe (strain 972 / ATCC 24843) (Fission yeast).